A 952-amino-acid chain; its full sequence is DNA topoisomerase 1 (952 aa).

One can recognise a Toprim domain in the interval 12 to 135 (RRLVIVESPA…VKRMVFHEIT (124 aa)). Mg(2+) is bound by residues glutamate 18 and aspartate 104. The Topo IA-type catalytic domain maps to 150–602 (NQKLVDAQET…RFYFGEGDGT (453 aa)). Residues 184 to 189 (SAGRVQ) form an interaction with DNA region. Tyrosine 334 acts as the O-(5'-phospho-DNA)-tyrosine intermediate in catalysis. The disordered stretch occupies residues 847-952 (RFGPYVTDGE…KATASKTSED (106 aa)). Basic and acidic residues predominate over residues 871-884 (TPERGYELLAEKRA). Over residues 885–906 (KGPAKKTAKKAVKKTAAKKAPA) the composition is skewed to basic residues. Low complexity-rich tracts occupy residues 907 to 930 (KKAA…AAKS) and 937 to 952 (AKTA…TSED).

This sequence belongs to the type IA topoisomerase family. Monomer. It depends on Mg(2+) as a cofactor.

It catalyses the reaction ATP-independent breakage of single-stranded DNA, followed by passage and rejoining.. Releases the supercoiling and torsional tension of DNA, which is introduced during the DNA replication and transcription, by transiently cleaving and rejoining one strand of the DNA duplex. Introduces a single-strand break via transesterification at a target site in duplex DNA. The scissile phosphodiester is attacked by the catalytic tyrosine of the enzyme, resulting in the formation of a DNA-(5'-phosphotyrosyl)-enzyme intermediate and the expulsion of a 3'-OH DNA strand. The free DNA strand then undergoes passage around the unbroken strand, thus removing DNA supercoils. Finally, in the religation step, the DNA 3'-OH attacks the covalent intermediate to expel the active-site tyrosine and restore the DNA phosphodiester backbone. In terms of biological role, relaxes supercoiled plasmid in vitro; in the presence of sIHF (integration host factor) relaxation is decreased. The sequence is that of DNA topoisomerase 1 from Streptomyces coelicolor (strain ATCC BAA-471 / A3(2) / M145).